Here is a 341-residue protein sequence, read N- to C-terminus: Uroporphyrinogen decarboxylase (341 aa).

Substrate is bound by residues R25–R29, F44, D74, Y151, S206, and H318.

It belongs to the uroporphyrinogen decarboxylase family. In terms of assembly, homodimer.

The protein resides in the cytoplasm. The catalysed reaction is uroporphyrinogen III + 4 H(+) = coproporphyrinogen III + 4 CO2. It functions in the pathway porphyrin-containing compound metabolism; protoporphyrin-IX biosynthesis; coproporphyrinogen-III from 5-aminolevulinate: step 4/4. In terms of biological role, catalyzes the decarboxylation of four acetate groups of uroporphyrinogen-III to yield coproporphyrinogen-III. The chain is Uroporphyrinogen decarboxylase from Christiangramia forsetii (strain DSM 17595 / CGMCC 1.15422 / KT0803) (Gramella forsetii).